Consider the following 163-residue polypeptide: Neurotrophin-3 (163 aa).

Positions 1 to 3 are cleaved as a signal peptide; that stretch reads IQS. Positions 4–119 are excised as a propeptide; sequence TSMDQGILTE…VLNRTSRRKR (116 aa). Asn-112 carries N-linked (GlcNAc...) asparagine glycosylation. The tract at residues 114–133 is disordered; it reads TSRRKREGKSHRGEYSVCDS. Residues 123–133 are compositionally biased toward basic and acidic residues; it reads SHRGEYSVCDS.

This sequence belongs to the NGF-beta family.

Its subcellular location is the secreted. Functionally, seems to promote the survival of visceral and proprioceptive sensory neurons. The sequence is that of Neurotrophin-3 (NTF3) from Lichanura trivirgata (Rosy boa).